A 427-amino-acid polypeptide reads, in one-letter code: Glutamate-1-semialdehyde 2,1-aminomutase (427 aa).

Residue lysine 265 is modified to N6-(pyridoxal phosphate)lysine.

This sequence belongs to the class-III pyridoxal-phosphate-dependent aminotransferase family. HemL subfamily. As to quaternary structure, homodimer. It depends on pyridoxal 5'-phosphate as a cofactor.

Its subcellular location is the cytoplasm. It carries out the reaction (S)-4-amino-5-oxopentanoate = 5-aminolevulinate. Its pathway is porphyrin-containing compound metabolism; protoporphyrin-IX biosynthesis; 5-aminolevulinate from L-glutamyl-tRNA(Glu): step 2/2. The protein is Glutamate-1-semialdehyde 2,1-aminomutase of Idiomarina loihiensis (strain ATCC BAA-735 / DSM 15497 / L2-TR).